Here is a 362-residue protein sequence, read N- to C-terminus: Probable dual-specificity RNA methyltransferase RlmN (362 aa).

Glu105 (proton acceptor) is an active-site residue. Residues 111–344 form the Radical SAM core domain; it reads HEYGNSICVT…VTIRREQGHD (234 aa). Cysteines 118 and 349 form a disulfide. Residues Cys125, Cys129, and Cys132 each contribute to the [4Fe-4S] cluster site. S-adenosyl-L-methionine is bound by residues 175-176, Ser207, 230-232, and Asn306; these read GE and SLH. Cys349 acts as the S-methylcysteine intermediate in catalysis.

The protein belongs to the radical SAM superfamily. RlmN family. [4Fe-4S] cluster serves as cofactor.

The protein localises to the cytoplasm. It catalyses the reaction adenosine(2503) in 23S rRNA + 2 reduced [2Fe-2S]-[ferredoxin] + 2 S-adenosyl-L-methionine = 2-methyladenosine(2503) in 23S rRNA + 5'-deoxyadenosine + L-methionine + 2 oxidized [2Fe-2S]-[ferredoxin] + S-adenosyl-L-homocysteine. The enzyme catalyses adenosine(37) in tRNA + 2 reduced [2Fe-2S]-[ferredoxin] + 2 S-adenosyl-L-methionine = 2-methyladenosine(37) in tRNA + 5'-deoxyadenosine + L-methionine + 2 oxidized [2Fe-2S]-[ferredoxin] + S-adenosyl-L-homocysteine. Functionally, specifically methylates position 2 of adenine 2503 in 23S rRNA and position 2 of adenine 37 in tRNAs. The polypeptide is Probable dual-specificity RNA methyltransferase RlmN (Bacillus anthracis (strain A0248)).